The following is a 38-amino-acid chain: Photosystem II reaction center protein X (38 aa).

A helical membrane pass occupies residues 8-28 (FLWSLVAGAVVLGALFGAIIF).

This sequence belongs to the PsbX family. Type 1 subfamily. PSII is composed of 1 copy each of membrane proteins PsbA, PsbB, PsbC, PsbD, PsbE, PsbF, PsbH, PsbI, PsbJ, PsbK, PsbL, PsbM, PsbT, PsbX, PsbY, PsbZ, Psb30/Ycf12, peripheral proteins PsbO, CyanoQ (PsbQ), PsbU, PsbV and a large number of cofactors. It forms dimeric complexes.

The protein localises to the cellular thylakoid membrane. In terms of biological role, involved in the binding and/or turnover of quinones at the Q(B) site of photosystem II (PSII). PSII is a light-driven water plastoquinone oxidoreductase, using light energy to abstract electrons from H(2)O, generating a proton gradient subsequently used for ATP formation. This Synechococcus sp. (strain JA-2-3B'a(2-13)) (Cyanobacteria bacterium Yellowstone B-Prime) protein is Photosystem II reaction center protein X.